The sequence spans 151 residues: Large ribosomal subunit protein uL13 (151 aa).

Belongs to the universal ribosomal protein uL13 family. Part of the 50S ribosomal subunit.

Functionally, this protein is one of the early assembly proteins of the 50S ribosomal subunit, although it is not seen to bind rRNA by itself. It is important during the early stages of 50S assembly. The sequence is that of Large ribosomal subunit protein uL13 from Synechococcus sp. (strain JA-2-3B'a(2-13)) (Cyanobacteria bacterium Yellowstone B-Prime).